The sequence spans 279 residues: Acetyl-coenzyme A carboxylase carboxyl transferase subunit beta (279 aa).

A CoA carboxyltransferase N-terminal domain is found at 23–279 (MWWKCDECGA…IVRLMTMLAP (257 aa)). Zn(2+) is bound by residues cysteine 27, cysteine 30, cysteine 46, and cysteine 49. The segment at 27 to 49 (CDECGAMLHKKQLEDNFYTCSEC) adopts a C4-type zinc-finger fold.

Belongs to the AccD/PCCB family. Acetyl-CoA carboxylase is a heterohexamer composed of biotin carboxyl carrier protein (AccB), biotin carboxylase (AccC) and two subunits each of ACCase subunit alpha (AccA) and ACCase subunit beta (AccD). Zn(2+) serves as cofactor.

The protein localises to the cytoplasm. The catalysed reaction is N(6)-carboxybiotinyl-L-lysyl-[protein] + acetyl-CoA = N(6)-biotinyl-L-lysyl-[protein] + malonyl-CoA. It functions in the pathway lipid metabolism; malonyl-CoA biosynthesis; malonyl-CoA from acetyl-CoA: step 1/1. In terms of biological role, component of the acetyl coenzyme A carboxylase (ACC) complex. Biotin carboxylase (BC) catalyzes the carboxylation of biotin on its carrier protein (BCCP) and then the CO(2) group is transferred by the transcarboxylase to acetyl-CoA to form malonyl-CoA. This chain is Acetyl-coenzyme A carboxylase carboxyl transferase subunit beta, found in Chlorobium phaeobacteroides (strain DSM 266 / SMG 266 / 2430).